A 446-amino-acid chain; its full sequence is Chromosomal replication initiator protein DnaA (446 aa).

Residues 1–92 (MENISDLWNS…SQAEEEIDLP (92 aa)) are domain I, interacts with DnaA modulators. Residues 93-109 (PAKPNAAQDDSNHLPQS) are domain II. The domain III, AAA+ region stretch occupies residues 110–326 (MLNPKYTFDT…GALIRVVAYS (217 aa)). Residues G154, G156, K157, and T158 each coordinate ATP. Residues 327–446 (SLINKDINAD…QVEEINDILK (120 aa)) form a domain IV, binds dsDNA region.

The protein belongs to the DnaA family. As to quaternary structure, oligomerizes as a right-handed, spiral filament on DNA at oriC.

The protein localises to the cytoplasm. Plays an essential role in the initiation and regulation of chromosomal replication. ATP-DnaA binds to the origin of replication (oriC) to initiate formation of the DNA replication initiation complex once per cell cycle. Binds the DnaA box (a 9 base pair repeat at the origin) and separates the double-stranded (ds)DNA. Forms a right-handed helical filament on oriC DNA; dsDNA binds to the exterior of the filament while single-stranded (ss)DNA is stabiized in the filament's interior. The ATP-DnaA-oriC complex binds and stabilizes one strand of the AT-rich DNA unwinding element (DUE), permitting loading of DNA polymerase. After initiation quickly degrades to an ADP-DnaA complex that is not apt for DNA replication. Binds acidic phospholipids. The chain is Chromosomal replication initiator protein DnaA from Bacillus anthracis (strain A0248).